The sequence spans 62 residues: Toxin Tst2 (62 aa).

The LCN-type CS-alpha/beta domain maps to 1–62 (KEGYAMDHEG…KVWDYATNKC (62 aa)). Cystine bridges form between Cys-11/Cys-62, Cys-15/Cys-38, Cys-23/Cys-43, and Cys-27/Cys-45. Cys-62 carries the post-translational modification Cysteine amide.

In terms of tissue distribution, expressed by the venom gland.

It localises to the secreted. Its function is as follows. Alpha toxins bind voltage-independently at site-3 of sodium channels (Nav) and inhibit the inactivation of the activated channels, thereby blocking neuronal transmission. Is toxic to mice. The protein is Toxin Tst2 of Tityus stigmurus (Brazilian scorpion).